A 135-amino-acid polypeptide reads, in one-letter code: uncharacterized protein (135 aa).

A helical membrane pass occupies residues 4-24 (LGVFLILASIVCGVVAICGCT).

It localises to the membrane. This is an uncharacterized protein from Methanocaldococcus jannaschii (strain ATCC 43067 / DSM 2661 / JAL-1 / JCM 10045 / NBRC 100440) (Methanococcus jannaschii).